The sequence spans 281 residues: Nucleotide-binding protein Tpet_1006 (281 aa).

9 to 16 (GLSGAGKT) contacts ATP. 58–61 (DVRS) lines the GTP pocket.

The protein belongs to the RapZ-like family.

Functionally, displays ATPase and GTPase activities. This is Nucleotide-binding protein Tpet_1006 from Thermotoga petrophila (strain ATCC BAA-488 / DSM 13995 / JCM 10881 / RKU-1).